We begin with the raw amino-acid sequence, 339 residues long: tRNA dimethylallyltransferase (339 aa).

Glycine 36 to threonine 43 lines the ATP pocket. Threonine 38–threonine 43 contributes to the substrate binding site. An interaction with substrate tRNA region spans residues aspartate 61–glutamine 64.

This sequence belongs to the IPP transferase family. As to quaternary structure, monomer. Mg(2+) serves as cofactor.

The catalysed reaction is adenosine(37) in tRNA + dimethylallyl diphosphate = N(6)-dimethylallyladenosine(37) in tRNA + diphosphate. In terms of biological role, catalyzes the transfer of a dimethylallyl group onto the adenine at position 37 in tRNAs that read codons beginning with uridine, leading to the formation of N6-(dimethylallyl)adenosine (i(6)A). The sequence is that of tRNA dimethylallyltransferase from Chlamydia trachomatis serovar L2 (strain ATCC VR-902B / DSM 19102 / 434/Bu).